A 253-amino-acid chain; its full sequence is Ribonuclease HII (253 aa).

In terms of domain architecture, RNase H type-2 spans 70-253; the sequence is NLIAGIDEVG…KSFEPIKSML (184 aa). Positions 76, 77, and 168 each coordinate a divalent metal cation.

Belongs to the RNase HII family. It depends on Mn(2+) as a cofactor. The cofactor is Mg(2+).

Its subcellular location is the cytoplasm. The catalysed reaction is Endonucleolytic cleavage to 5'-phosphomonoester.. In terms of biological role, endonuclease that specifically degrades the RNA of RNA-DNA hybrids. The polypeptide is Ribonuclease HII (Streptococcus agalactiae serotype III (strain NEM316)).